The chain runs to 219 residues: MDQLSMKKMAAQAALQYVKPDSIIGVGSGSTVNCFIEVLGTIKETIKGAVAASKASEELLLRQGIEVFSANDVSGLDIYVDGADEINPQKMMIKGGGAALTREKIVAALAKKFICIVDSSKQVDVLGSTFALPIEVIPMARSQVARKLVALGGSPEYRENVVTDNGNVILDVYNFKIMNPIEMEKELNNVAGVVTNGIFALRSADIVIVGTPEGTKIIG.

Residues 28 to 31 (SGST), 81 to 84 (DGAD), and 94 to 97 (KGGG) each bind substrate. Glutamate 103 acts as the Proton acceptor in catalysis. Lysine 121 serves as a coordination point for substrate.

Belongs to the ribose 5-phosphate isomerase family. Homodimer.

It carries out the reaction aldehydo-D-ribose 5-phosphate = D-ribulose 5-phosphate. Its pathway is carbohydrate degradation; pentose phosphate pathway; D-ribose 5-phosphate from D-ribulose 5-phosphate (non-oxidative stage): step 1/1. Its function is as follows. Catalyzes the reversible conversion of ribose-5-phosphate to ribulose 5-phosphate. The polypeptide is Ribose-5-phosphate isomerase A (Histophilus somni (strain 2336) (Haemophilus somnus)).